The primary structure comprises 962 residues: Protease 3 (962 aa).

A signal peptide spans 1 to 23; the sequence is MPRSTWFKALLLFVALWAPLSQA. His-88 is a binding site for Zn(2+). Catalysis depends on Glu-91, which acts as the Proton acceptor. Zn(2+) is bound by residues His-92 and Glu-169.

It belongs to the peptidase M16 family. As to quaternary structure, monomer. Requires Zn(2+) as cofactor.

The protein localises to the periplasm. It carries out the reaction Preferential cleavage of 16-Tyr-|-Leu-17 and 25-Phe-|-Tyr-26 bonds of oxidized insulin B chain. Also acts on other substrates of Mw less than 7 kDa such as insulin and glucagon.. Endopeptidase that degrades small peptides of less than 7 kDa, such as glucagon and insulin. In Shigella flexneri, this protein is Protease 3 (ptrA).